The primary structure comprises 201 residues: Imidazole glycerol phosphate synthase subunit HisH (201 aa).

Residues 1–201 (MVFIADYGAG…LQVLRNFAEC (201 aa)) enclose the Glutamine amidotransferase type-1 domain. C79 acts as the Nucleophile in catalysis. Active-site residues include H183 and E185.

In terms of assembly, heterodimer of HisH and HisF.

It is found in the cytoplasm. The enzyme catalyses 5-[(5-phospho-1-deoxy-D-ribulos-1-ylimino)methylamino]-1-(5-phospho-beta-D-ribosyl)imidazole-4-carboxamide + L-glutamine = D-erythro-1-(imidazol-4-yl)glycerol 3-phosphate + 5-amino-1-(5-phospho-beta-D-ribosyl)imidazole-4-carboxamide + L-glutamate + H(+). The catalysed reaction is L-glutamine + H2O = L-glutamate + NH4(+). The protein operates within amino-acid biosynthesis; L-histidine biosynthesis; L-histidine from 5-phospho-alpha-D-ribose 1-diphosphate: step 5/9. IGPS catalyzes the conversion of PRFAR and glutamine to IGP, AICAR and glutamate. The HisH subunit catalyzes the hydrolysis of glutamine to glutamate and ammonia as part of the synthesis of IGP and AICAR. The resulting ammonia molecule is channeled to the active site of HisF. This chain is Imidazole glycerol phosphate synthase subunit HisH, found in Chlorobium luteolum (strain DSM 273 / BCRC 81028 / 2530) (Pelodictyon luteolum).